The chain runs to 158 residues: Ribosomal RNA large subunit methyltransferase H (158 aa).

Residues leucine 73, glycine 107, and 126–131 (FGEITL) each bind S-adenosyl-L-methionine.

Belongs to the RNA methyltransferase RlmH family. In terms of assembly, homodimer.

The protein localises to the cytoplasm. The catalysed reaction is pseudouridine(1915) in 23S rRNA + S-adenosyl-L-methionine = N(3)-methylpseudouridine(1915) in 23S rRNA + S-adenosyl-L-homocysteine + H(+). Specifically methylates the pseudouridine at position 1915 (m3Psi1915) in 23S rRNA. This is Ribosomal RNA large subunit methyltransferase H from Rubrobacter xylanophilus (strain DSM 9941 / JCM 11954 / NBRC 16129 / PRD-1).